A 424-amino-acid chain; its full sequence is S-inosyl-L-homocysteine hydrolase (424 aa).

Substrate-binding residues include Asp-130 and Glu-155. Position 156–158 (156–158) interacts with NAD(+); that stretch reads TTT. Substrate contacts are provided by Lys-185 and Asp-189. NAD(+) is bound by residues Asn-190, 219–224, Glu-242, Asn-277, 298–300, and Asn-346; these read GYGWCG and AGH.

The protein belongs to the adenosylhomocysteinase family. NAD(+) serves as cofactor.

It is found in the cytoplasm. The enzyme catalyses S-inosyl-L-homocysteine + H2O = L-homocysteine + inosine. The protein operates within amino-acid biosynthesis; S-adenosyl-L-methionine biosynthesis. In terms of biological role, catalyzes the hydrolysis of S-inosyl-L-homocysteine (SIH) to L-homocysteine (Hcy) and inosine. Likely functions in a S-adenosyl-L-methionine (SAM) recycling pathway from S-adenosyl-L-homocysteine (SAH) produced from SAM-dependent methylation reactions. Can also catalyze the reverse reaction in vitro, i.e. the synthesis of SIH from Hcy and inosine. In Methanopyrus kandleri (strain AV19 / DSM 6324 / JCM 9639 / NBRC 100938), this protein is S-inosyl-L-homocysteine hydrolase.